The sequence spans 408 residues: Potassium channel subfamily K member 13 (408 aa).

The Cytoplasmic segment spans residues 1 to 19 (MAGRGFSWGPGHLNEDNAR). A helical transmembrane segment spans residues 20 to 40 (FLLLAALIVLYLLGGAAVFSA). 2 N-linked (GlcNAc...) asparagine glycosylation sites follow: N59 and N65. Positions 95 to 115 (WDFTGAFYFVGTVVSTIGFGM) form an intramembrane region, pore-forming. K(+) is bound by residues T110, I111, and G112. Positions 110 to 115 (TIGFGM) are selectivity filter 1. Residues 125–145 (IFLIFYGLVGCSSTILFFNLF) form a helical membrane-spanning segment. Over 146-193 (LERLITIIAYIMKSCHQRQLRRRGALPQESLKDAGQCEVDSLAGWKPS) the chain is Cytoplasmic. A helical membrane pass occupies residues 194 to 214 (VYYVMLILCTASILISCCASA). Residues 224–244 (YFDSLYFCFVAFSTIGFGDLV) constitute an intramembrane region (pore-forming). T237, I238, G239, and F240 together coordinate K(+). Residues 237-242 (TIGFGD) are selectivity filter 2. The helical transmembrane segment at 263–283 (VFILMGVCCIYSLFNVISILI) threads the bilayer. At 284–408 (KQSLNWILRK…NRLAETSGDR (125 aa)) the chain is on the cytoplasmic side.

It belongs to the two pore domain potassium channel (TC 1.A.1.8) family. In terms of assembly, homodimer. Heterodimer with KCNK12. As to expression, expressed in microglia (at protein level).

The protein resides in the cell membrane. It catalyses the reaction K(+)(in) = K(+)(out). The channel conductance is activated by arachidonic acid and inhibited by Ba(2+) ions, volatile anesthetics such as halothane and antiarrhythmic drugs mexiletine and lidocaine. Insensitive to extracellular pH change. Functionally, k(+) channel that conducts outward rectifying tonic currents potentiated by purinergic signals. Homo- and heterodimerizes to form functional channels with distinct regulatory and gating properties. Contributes most of K(+) currents at the plasma membrane of resting microglia. Maintains a depolarized membrane potential required for proper ramified microglia morphology and phagocytosis, selectively mediating microglial pruning of presynaptic compartments at hippocampal excitatory synapses. Upon local release of ATP caused by neuronal injury or infection, it is potentiated by P2RY12 and P2RX7 receptor signaling and contributes to ATP-triggered K(+) efflux underlying microglial NLRP3 inflammasome assembly and IL1B release. The polypeptide is Potassium channel subfamily K member 13 (Homo sapiens (Human)).